The chain runs to 990 residues: DNA ligase 4 (990 aa).

The tract at residues 57–84 (TQKKGRQPPGPRRKAGPHGHSNLSPHEA) is disordered. The ATP site is built by Glu324, Lys326, Leu327, Arg331, Glu394, Phe436, Glu496, Lys501, Lys518, and Lys520. Catalysis depends on Lys326, which acts as the N6-AMP-lysine intermediate. Residue Glu394 participates in Mg(2+) binding. Glu496 serves as a coordination point for Mg(2+). 2 BRCT domains span residues 728–821 (PQSK…LPYL) and 900–989 (YMFS…RYQW).

Belongs to the ATP-dependent DNA ligase family. It depends on Mg(2+) as a cofactor.

The protein resides in the nucleus. The enzyme catalyses ATP + (deoxyribonucleotide)n-3'-hydroxyl + 5'-phospho-(deoxyribonucleotide)m = (deoxyribonucleotide)n+m + AMP + diphosphate.. Functionally, DNA ligase involved in DNA non-homologous end joining (NHEJ); required for double-strand break (DSB) repair. This chain is DNA ligase 4 (LIG4), found in Phaeosphaeria nodorum (strain SN15 / ATCC MYA-4574 / FGSC 10173) (Glume blotch fungus).